A 61-amino-acid chain; its full sequence is Large ribosomal subunit protein bL28 (61 aa).

The disordered stretch occupies residues 1 to 27; the sequence is MAKDFVTGKKTTFGNTRSHALNSSSRS. The segment covering 9 to 27 has biased composition (polar residues); that stretch reads KKTTFGNTRSHALNSSSRS.

This sequence belongs to the bacterial ribosomal protein bL28 family.

In Lactobacillus delbrueckii subsp. bulgaricus (strain ATCC 11842 / DSM 20081 / BCRC 10696 / JCM 1002 / NBRC 13953 / NCIMB 11778 / NCTC 12712 / WDCM 00102 / Lb 14), this protein is Large ribosomal subunit protein bL28.